We begin with the raw amino-acid sequence, 226 residues long: Cytidylate kinase (226 aa).

12 to 20 (GPSGAGKGT) is an ATP binding site.

Belongs to the cytidylate kinase family. Type 1 subfamily.

The protein localises to the cytoplasm. The catalysed reaction is CMP + ATP = CDP + ADP. The enzyme catalyses dCMP + ATP = dCDP + ADP. The protein is Cytidylate kinase of Xanthomonas campestris pv. campestris (strain B100).